Reading from the N-terminus, the 122-residue chain is Mth938 domain-containing protein (122 aa).

The interval 6–122 (IASLSWGQMK…RVGGVFHSTC (117 aa)) is MTH138-like domain.

Belongs to the AAMDC family.

It is found in the cytoplasm. May play a role in preadipocyte differentiation and adipogenesis. The polypeptide is Mth938 domain-containing protein (AAMDC) (Homo sapiens (Human)).